The primary structure comprises 185 residues: Ribosome-recycling factor (185 aa).

This sequence belongs to the RRF family.

The protein localises to the cytoplasm. Functionally, responsible for the release of ribosomes from messenger RNA at the termination of protein biosynthesis. May increase the efficiency of translation by recycling ribosomes from one round of translation to another. This is Ribosome-recycling factor from Xanthomonas campestris pv. campestris (strain 8004).